Reading from the N-terminus, the 420-residue chain is Beta-arrestin-2 (420 aa).

Position 48 is a phosphotyrosine (Tyr-48). Residues Pro-176 and Pro-181 each carry the hydroxyproline; by PHD2 modification. The segment at Ala-240 to Gly-409 is interaction with TRAF6. A Phosphoserine modification is found at Ser-360. The interval Pro-374–Cys-420 is interaction with AP2B1. Thr-393 carries the phosphothreonine modification. The short motif at Asp-396–Arg-406 is the [DE]-X(1,2)-F-X-X-[FL]-X-X-X-R motif element.

It belongs to the arrestin family. As to quaternary structure, homooligomer; the self-association is mediated by InsP6-binding. Heterooligomer with ARRB1; the association is mediated by InsP6-binding. Interacts with ADRB2 and CHRM2. Interacts with PDE4A. Interacts with PDE4D. Interacts with MAPK10, MAPK1 and MAPK3. Interacts with DRD2. Interacts with FSHR. Interacts with CLTC. Interacts with HTR2C. Interacts with CRR5. Interacts with CXCR4. Interacts with SRC. Interacts with DUSP16; the interaction is interrupted by stimulation of AGTR1 and activation of MAPK10. Interacts with CHUK; the interaction is enhanced stimulation of ADRB2. Interacts with RELA. Interacts with MDM2; the interaction is enhanced by activation of GPCRs. Interacts with SLC9A5. Interacts with TRAF6. Interacts with IGF1R. Interacts with ENG. Interacts with KIR2DL1, KIR2DL3 and KIR2DL4. Interacts with LDLR. Interacts with AP2B1. Interacts with C5AR1. Interacts with RAF1. Interacts with MAP2K1. Interacts with MAPK1. Interacts with MAPK10; the interaction enhances MAPK10 activation by MAP3K5. Interacts with MAP2K4; the interaction is enhanced by presence of MAP3K5 and MAPK10. Interacts with MAP3K5. Interacts with AKT1. Interacts with IKBKB and MAP3K14. Interacts with SMO (activated). Interacts with GSK3A and GSK3B. Associates with protein phosphatase 2A (PP2A). Interacts with CXCR4; the interaction is dependent on C-terminal phosphorylation of CXCR4 and allows activation of MAPK1 and MAPK3. Interacts with GPR143. Interacts with HCK and CXCR1 (phosphorylated). Interacts with ACKR3 and ACKR4. Interacts with ARRDC1; the interaction is direct. Interacts with GPR61, GPR62 and GPR135. Interacts (via NACHT and LRR domains) with NLRP3; this interaction is direct and inducible by omega-3 polyunsaturated fatty acids (PUFAs). Interacts with FFAR4 (via C-terminus); this interaction is stimulated by long-chain fatty acids (LCFAs). Interacts with GPR35. Interacts with GPR84. Interacts with TIGIT; this interaction inhibits the NF-kappa-B pathway. Interacts with TGFBR3. In terms of processing, phosphorylated at Thr-382 in the cytoplasm; probably dephosphorylated at the plasma membrane. The phosphorylation does not regulate internalization and recycling of ADRB2, interaction with clathrin or AP2B1. Post-translationally, the ubiquitination status appears to regulate the formation and trafficking of beta-arrestin-GPCR complexes and signaling. Ubiquitination appears to occur GPCR-specific. Ubiquitinated by MDM2; the ubiquitination is required for rapid internalization of ADRB2. Deubiquitinated by USP33; the deubiquitination leads to a dissociation of the beta-arrestin-GPCR complex. Stimulation of a class A GPCR, such as ADRB2, induces transient ubiquitination and subsequently promotes association with USP33. Stimulation of a class B GPCR promotes a sustained ubiquitination. Deubiquitinated by USP20; allowing USP20 to deubiquitinate TRAF6 leading to inhibition of NF-kappa-B signaling. Hydroxylation by PHD2 modulates the rate of internalization by slowing down recruitment to the plasma membrane and inhibiting subsequent co-internalization with class A receptors. In terms of tissue distribution, found in a variety of tissues. The short isoform is the most abundant form in all tissues.

The protein resides in the cytoplasm. The protein localises to the nucleus. It is found in the cell membrane. It localises to the membrane. Its subcellular location is the clathrin-coated pit. The protein resides in the cytoplasmic vesicle. Functionally, functions in regulating agonist-mediated G-protein coupled receptor (GPCR) signaling by mediating both receptor desensitization and resensitization processes. During homologous desensitization, beta-arrestins bind to the GPRK-phosphorylated receptor and sterically preclude its coupling to the cognate G-protein; the binding appears to require additional receptor determinants exposed only in the active receptor conformation. The beta-arrestins target many receptors for internalization by acting as endocytic adapters (CLASPs, clathrin-associated sorting proteins) and recruiting the GPRCs to the adapter protein 2 complex 2 (AP-2) in clathrin-coated pits (CCPs). However, the extent of beta-arrestin involvement appears to vary significantly depending on the receptor, agonist and cell type. Internalized arrestin-receptor complexes traffic to intracellular endosomes, where they remain uncoupled from G-proteins. Two different modes of arrestin-mediated internalization occur. Class A receptors, like ADRB2, OPRM1, ENDRA, D1AR and ADRA1B dissociate from beta-arrestin at or near the plasma membrane and undergo rapid recycling. Class B receptors, like AVPR2, AGTR1, NTSR1, TRHR and TACR1 internalize as a complex with arrestin and traffic with it to endosomal vesicles, presumably as desensitized receptors, for extended periods of time. Receptor resensitization then requires that receptor-bound arrestin is removed so that the receptor can be dephosphorylated and returned to the plasma membrane. Mediates endocytosis of CCR7 following ligation of CCL19 but not CCL21. Involved in internalization of P2RY1, P2RY4, P2RY6 and P2RY11 and ATP-stimulated internalization of P2RY2. Involved in phosphorylation-dependent internalization of OPRD1 and subsequent recycling or degradation. Involved in ubiquitination of IGF1R. Beta-arrestins function as multivalent adapter proteins that can switch the GPCR from a G-protein signaling mode that transmits short-lived signals from the plasma membrane via small molecule second messengers and ion channels to a beta-arrestin signaling mode that transmits a distinct set of signals that are initiated as the receptor internalizes and transits the intracellular compartment. Acts as a signaling scaffold for MAPK pathways such as MAPK1/3 (ERK1/2) and MAPK10 (JNK3). ERK1/2 and JNK3 activated by the beta-arrestin scaffold are largely excluded from the nucleus and confined to cytoplasmic locations such as endocytic vesicles, also called beta-arrestin signalosomes. Acts as a signaling scaffold for the AKT1 pathway. GPCRs for which the beta-arrestin-mediated signaling relies on both ARRB1 and ARRB2 (codependent regulation) include ADRB2, F2RL1 and PTH1R. For some GPCRs the beta-arrestin-mediated signaling relies on either ARRB1 or ARRB2 and is inhibited by the other respective beta-arrestin form (reciprocal regulation). Increases ERK1/2 signaling in AGTR1- and AVPR2-mediated activation (reciprocal regulation). Involved in CCR7-mediated ERK1/2 signaling involving ligand CCL19. Is involved in type-1A angiotensin II receptor/AGTR1-mediated ERK activity. Is involved in type-1A angiotensin II receptor/AGTR1-mediated MAPK10 activity. Is involved in dopamine-stimulated AKT1 activity in the striatum by disrupting the association of AKT1 with its negative regulator PP2A. Involved in AGTR1-mediated chemotaxis. Appears to function as signaling scaffold involved in regulation of MIP-1-beta-stimulated CCR5-dependent chemotaxis. Involved in attenuation of NF-kappa-B-dependent transcription in response to GPCR or cytokine stimulation by interacting with and stabilizing CHUK. Suppresses UV-induced NF-kappa-B-dependent activation by interacting with CHUK. The function is promoted by stimulation of ADRB2 and dephosphorylation of ARRB2. Involved in p53/TP53-mediated apoptosis by regulating MDM2 and reducing the MDM2-mediated degradation of p53/TP53. May serve as nuclear messenger for GPCRs. Upon stimulation of OR1D2, may be involved in regulation of gene expression during the early processes of fertilization. Also involved in regulation of receptors other than GPCRs. Involved in endocytosis of TGFBR2 and TGFBR3 and down-regulates TGF-beta signaling such as NF-kappa-B activation. Involved in endocytosis of low-density lipoprotein receptor/LDLR. Involved in endocytosis of smoothened homolog/Smo, which also requires GRK2. Involved in endocytosis of SLC9A5. Involved in endocytosis of ENG and subsequent TGF-beta-mediated ERK activation and migration of epithelial cells. Involved in Toll-like receptor and IL-1 receptor signaling through the interaction with TRAF6 which prevents TRAF6 autoubiquitination and oligomerization required for activation of NF-kappa-B and JUN. Involved in insulin resistance by acting as insulin-induced signaling scaffold for SRC, AKT1 and INSR. Involved in regulation of inhibitory signaling of natural killer cells by recruiting PTPN6 and PTPN11 to KIR2DL1. Involved in IL8-mediated granule release in neutrophils. Involved in the internalization of the atypical chemokine receptor ACKR3. Acts as an adapter protein coupling FFAR4 receptor to specific downstream signaling pathways, as well as mediating receptor endocytosis. During the activation step of NLRP3 inflammasome, directly associates with NLRP3 leading to inhibition of pro-inflammatory cytokine release and inhibition of inflammation. The chain is Beta-arrestin-2 (ARRB2) from Bos taurus (Bovine).